A 188-amino-acid polypeptide reads, in one-letter code: Peptidyl-tRNA hydrolase (188 aa).

Tyrosine 14 serves as a coordination point for tRNA. Histidine 19 acts as the Proton acceptor in catalysis. Tyrosine 64, asparagine 66, and asparagine 112 together coordinate tRNA.

It belongs to the PTH family. As to quaternary structure, monomer.

The protein localises to the cytoplasm. It catalyses the reaction an N-acyl-L-alpha-aminoacyl-tRNA + H2O = an N-acyl-L-amino acid + a tRNA + H(+). Hydrolyzes ribosome-free peptidyl-tRNAs (with 1 or more amino acids incorporated), which drop off the ribosome during protein synthesis, or as a result of ribosome stalling. Functionally, catalyzes the release of premature peptidyl moieties from peptidyl-tRNA molecules trapped in stalled 50S ribosomal subunits, and thus maintains levels of free tRNAs and 50S ribosomes. This is Peptidyl-tRNA hydrolase from Clostridium novyi (strain NT).